The following is a 410-amino-acid chain: Histidine--tRNA ligase (410 aa).

It belongs to the class-II aminoacyl-tRNA synthetase family.

The protein resides in the cytoplasm. It carries out the reaction tRNA(His) + L-histidine + ATP = L-histidyl-tRNA(His) + AMP + diphosphate + H(+). This is Histidine--tRNA ligase from Methanoregula boonei (strain DSM 21154 / JCM 14090 / 6A8).